Here is a 646-residue protein sequence, read N- to C-terminus: Type III restriction-modification enzyme EcoPI Mod subunit (646 aa).

The tract at residues 123–126 (DPPY) is binding of S-adenosyl methionine.

This sequence belongs to the N(4)/N(6)-methyltransferase family. In terms of assembly, homodimer. A heterotetramer with stoichiometry Res(2)Mod(2).

It catalyses the reaction a 2'-deoxyadenosine in DNA + S-adenosyl-L-methionine = an N(6)-methyl-2'-deoxyadenosine in DNA + S-adenosyl-L-homocysteine + H(+). Functionally, a beta subtype methylase that binds the system-specific DNA recognition site 5'-AGACC-3' and methylates A-3 (of only 1 strand as the other does not have an A residue). DNA restriction requires both the Res and Mod subunits. The polypeptide is Type III restriction-modification enzyme EcoPI Mod subunit (Enterobacteriaceae (Bacteriophage P1)).